Consider the following 711-residue polypeptide: Interferon-induced GTP-binding protein Mx2 (711 aa).

2 disordered regions span residues 1–26 (MPKP…HKEM) and 62–88 (MLTL…NLYS). The segment covering 66-82 (SPQQPGGKSGQQTSKGP) has biased composition (low complexity). The Dynamin-type G domain maps to 112 to 383 (DLALPTIAVI…LIGHISKSLP (272 aa)). The G1 motif stretch occupies residues 122 to 129 (GDQSSGKS). A GTP-binding site is contributed by 122–129 (GDQSSGKS). Positions 147-149 (ITR) are G2 motif. Positions 221-224 (DLPG) are G3 motif. GTP is bound by residues 221-225 (DLPGI) and 290-293 (TKPD). Positions 290–293 (TKPD) are G4 motif. A G5 motif region spans residues 322 to 325 (KCRG). Positions 619-710 (ITEIGVHVNA…TLSKFAQSLQ (92 aa)) constitute a GED domain.

This sequence belongs to the TRAFAC class dynamin-like GTPase superfamily. Dynamin/Fzo/YdjA family. Ubiquitous.

The protein localises to the cytoplasm. It localises to the nucleus. Functionally, interferon-induced dynamin-like GTPase with antiviral activity against influenza virus A (FLUAV). This Sus scrofa (Pig) protein is Interferon-induced GTP-binding protein Mx2 (MX2).